The sequence spans 134 residues: Kinetochore-binding protein 3 (134 aa).

Its subcellular location is the nucleus. The protein localises to the chromosome. The protein resides in the centromere. It localises to the kinetochore. This chain is Kinetochore-binding protein 3 (kbp-3), found in Caenorhabditis elegans.